We begin with the raw amino-acid sequence, 523 residues long: NAD(P)H-quinone oxidoreductase subunit 2 (523 aa).

The next 14 helical transmembrane spans lie at 29–49 (AIAPEGAVLVAMLATLLVDLA), 57–77 (WVPPICYAGLGTALVLLAQQW), 94–114 (LAISFRAVVALSTLLSLLISW), 123–143 (PIGEYAAILLAATLGAMLLCG), 147–167 (LVSVFVSLETLSVASYLLAGY), 182–202 (LLVGSAAAAVFLYGASLLYGL), 223–243 (AALSLVFVLATVAFKIAAVPF), 255–275 (PTPVVAFLSVGSKAAGFALAL), 291–311 (LLFTVLAVLSMTLGNVVALAQ), 317–337 (MLAYSSIGQAGFVMIGLVCGT), 345–365 (VLYMAAYLFMNLGAFACIILF), 389–409 (LGLSLCLLSLGGIPPMLGFFG), 424–444 (LLVVVGLVTSVVSIYYYISVI), and 477–497 (IALVGCVVVTAVGGILSNPLF).

Belongs to the complex I subunit 2 family. NDH-1 can be composed of about 15 different subunits; different subcomplexes with different compositions have been identified which probably have different functions.

It is found in the cellular thylakoid membrane. The enzyme catalyses a plastoquinone + NADH + (n+1) H(+)(in) = a plastoquinol + NAD(+) + n H(+)(out). The catalysed reaction is a plastoquinone + NADPH + (n+1) H(+)(in) = a plastoquinol + NADP(+) + n H(+)(out). In terms of biological role, NDH-1 shuttles electrons from an unknown electron donor, via FMN and iron-sulfur (Fe-S) centers, to quinones in the respiratory and/or the photosynthetic chain. The immediate electron acceptor for the enzyme in this species is believed to be plastoquinone. Couples the redox reaction to proton translocation, and thus conserves the redox energy in a proton gradient. Cyanobacterial NDH-1 also plays a role in inorganic carbon-concentration. The protein is NAD(P)H-quinone oxidoreductase subunit 2 of Prochlorococcus marinus (strain MIT 9313).